The chain runs to 449 residues: Glucose-6-phosphate isomerase (449 aa).

Catalysis depends on Glu291, which acts as the Proton donor. Residues His312 and Lys426 contribute to the active site.

Belongs to the GPI family.

The protein resides in the cytoplasm. It catalyses the reaction alpha-D-glucose 6-phosphate = beta-D-fructose 6-phosphate. The protein operates within carbohydrate biosynthesis; gluconeogenesis. Its pathway is carbohydrate degradation; glycolysis; D-glyceraldehyde 3-phosphate and glycerone phosphate from D-glucose: step 2/4. Functionally, catalyzes the reversible isomerization of glucose-6-phosphate to fructose-6-phosphate. This chain is Glucose-6-phosphate isomerase, found in Streptococcus pneumoniae serotype 4 (strain ATCC BAA-334 / TIGR4).